The primary structure comprises 526 residues: Calcium-dependent protein kinase 28 (526 aa).

The tract at residues 1–37 (MQPDPQPHGRGREKAAGAGPRLPPPVTAPSVGRPASV) is disordered. Residues 49 to 307 (YRIGKKLGQG…AHEVLCHPWI (259 aa)) form the Protein kinase domain. Residues 55 to 63 (LGQGQFGTT) and K78 each bind ATP. The Proton acceptor role is filled by D173. Residues 313–343 (APDKPIDSAVLSRLKHFSAMNKLKKMALRVI) are autoinhibitory domain. 4 consecutive EF-hand domains span residues 350 to 385 (EEIGGLKELFKMIDTDNSGTITYDELKNGLKRVGSD), 386 to 421 (LMEPEIQALMDAADIDNSGTIDYGEFLAATLHMNKL), 422 to 457 (EREENLVSAFTFFDKDGSGFITIDELSQACEQFGLS), and 460 to 491 (HLEDMIKDVDQNNDGQIDYSEFAAMMRKGNAG). Ca(2+) is bound by residues D363, D365, S367, T369, E374, D399, D401, S403, T405, E410, D435, D437, S439, E446, D469, N471, D473, Q475, and E480.

This sequence belongs to the protein kinase superfamily. Ser/Thr protein kinase family. CDPK subfamily.

The enzyme catalyses L-seryl-[protein] + ATP = O-phospho-L-seryl-[protein] + ADP + H(+). The catalysed reaction is L-threonyl-[protein] + ATP = O-phospho-L-threonyl-[protein] + ADP + H(+). Its activity is regulated as follows. Activated by calcium. Autophosphorylation may play an important role in the regulation of the kinase activity. In terms of biological role, may play a role in signal transduction pathways that involve calcium as a second messenger. This is Calcium-dependent protein kinase 28 from Oryza sativa subsp. japonica (Rice).